Here is a 123-residue protein sequence, read N- to C-terminus: Small ribosomal subunit protein eS8 (123 aa).

The segment at 1-37 (MKDQGRSTRKRTGGRLKHASNKKRHQLGREPAETTVG) is disordered. Basic residues predominate over residues 7–26 (STRKRTGGRLKHASNKKRHQ).

The protein belongs to the eukaryotic ribosomal protein eS8 family. As to quaternary structure, part of the 30S ribosomal subunit.

This chain is Small ribosomal subunit protein eS8, found in Halorubrum lacusprofundi (strain ATCC 49239 / DSM 5036 / JCM 8891 / ACAM 34).